Consider the following 547-residue polypeptide: MPSPTERAAHRTPPAALGAFPDLFVDYCTDFDAVADFYPGDWQSRPARRAAATAAAKRPADREVLADTLLDQNERWGLDERTRSHIETLRDPDSIAVVTGQQVGLFTGPLYTIYKTITTLQLIEEWADQTGRPVVPVFWVEGEDHDFEEIAAAHVLQHNEVVPLSYEPGVDDNPGAVGRLALTDGIQDVVDRLDEALPPSDFKPAVMEQVRAAYQPGTRLEDAFARLMRSLFEDDGLVFMNPDDARLKALTRPLFRRDIEDPRASVAPVNAAGRALRDRGYHAQVNAHPTNLFWLGDDGRWAIDLEDENAFRLRGTDRTFSRSDLLNRLDETPERFSPNVVLRPLMQDHLLPTAAYVAGPGEVSYFAQYGGVYDWAGLDMPLIHPRASVSLVEGKVQKVLDKYGLTVADFRDGLEPLFQDVVVDTMEVDVDALFSEALPQLHQTLNALKPEVEAVDRTLGASTEATRSAIMDEMEALKQKVVRAEKRQQDEVRAQLKKAHTNLRPDGTLQERTINVLYYLNKYSPALLDDLRHALRTDTSAHQVVGV.

A coiled-coil region spans residues 461–504 (ASTEATRSAIMDEMEALKQKVVRAEKRQQDEVRAQLKKAHTNLR).

Belongs to the BshC family.

This is Putative cysteine ligase BshC from Salinibacter ruber (strain DSM 13855 / M31).